The following is a 448-amino-acid chain: Bud neck protein 5 (448 aa).

Disordered stretches follow at residues 63-103 (SGND…DPSQ), 171-211 (DDEW…TLGG), and 242-352 (GDNE…SSPI). A phosphoserine mark is found at Ser70 and Ser179. Over residues 171–180 (DDEWEDEKSD) the composition is skewed to acidic residues. A compositionally biased stretch (basic and acidic residues) spans 181–191 (VEEGRVDKGTE). A Phosphoserine modification is found at Ser194. Positions 245–262 (EYNHESSRLADQTPHDDN) are enriched in basic and acidic residues. Thr257 carries the post-translational modification Phosphothreonine. A compositionally biased stretch (polar residues) spans 264 to 281 (ENCPNRSGGSTPLDSQTK). Ser270 and Ser273 each carry phosphoserine. At Thr274 the chain carries Phosphothreonine. Positions 325–343 (SVSSNSNSRNGSRKSSLNK) are enriched in low complexity. A phosphoserine mark is found at Ser332 and Ser340. Tyr344 bears the Phosphotyrosine mark. 2 positions are modified to phosphoserine: Ser346 and Ser350.

As to quaternary structure, component of the GIN4 complex composed of at least BNI5, CDC3, CDC10, CDC11, CDC12, GIN4, NAP1 and SHS1. Interacts directly with CDC11, CDC12 and SHS1.

The protein localises to the cytoplasm. It localises to the bud neck. Its function is as follows. Required for normal septin function and cytokinesis. Its recruitment to the bud neck by CDCd11 and SHS1 ensures efficient localization at the bud neck of MYO1, the type II myosin of the actomyosin contractile ring. This chain is Bud neck protein 5, found in Saccharomyces cerevisiae (strain ATCC 204508 / S288c) (Baker's yeast).